The primary structure comprises 467 residues: UDP-N-acetylmuramoylalanine--D-glutamate ligase (467 aa).

Position 121–127 (G121–T127) interacts with ATP.

This sequence belongs to the MurCDEF family.

It localises to the cytoplasm. The enzyme catalyses UDP-N-acetyl-alpha-D-muramoyl-L-alanine + D-glutamate + ATP = UDP-N-acetyl-alpha-D-muramoyl-L-alanyl-D-glutamate + ADP + phosphate + H(+). It functions in the pathway cell wall biogenesis; peptidoglycan biosynthesis. In terms of biological role, cell wall formation. Catalyzes the addition of glutamate to the nucleotide precursor UDP-N-acetylmuramoyl-L-alanine (UMA). This chain is UDP-N-acetylmuramoylalanine--D-glutamate ligase, found in Brucella suis biovar 1 (strain 1330).